A 118-amino-acid polypeptide reads, in one-letter code: MARVKRGVIARARHKKILKQAKGYYGARSRVYRVAFQAVIKAGQYAYRDRRQRKRQFRQLWIARINAAARQNGISYSKFINGLKKASVEIDRKILADIAVFDKVAFSALVEKAKAALA.

It belongs to the bacterial ribosomal protein bL20 family.

Binds directly to 23S ribosomal RNA and is necessary for the in vitro assembly process of the 50S ribosomal subunit. It is not involved in the protein synthesizing functions of that subunit. The protein is Large ribosomal subunit protein bL20 of Salmonella arizonae (strain ATCC BAA-731 / CDC346-86 / RSK2980).